The sequence spans 402 residues: Shaggy-related protein kinase GSK2 (402 aa).

A disordered region spans residues 1–38 (MDQPAPAPEPMLLDAQPPAAVACDKKQQEGEAPYAEGN). Residues 63 to 347 (YMAERVVGTG…ALDACAHPFF (285 aa)) enclose the Protein kinase domain. ATP-binding positions include 69-77 (VGTGSFGIV) and Lys92. Catalysis depends on Asp188, which acts as the Proton acceptor.

The protein belongs to the protein kinase superfamily. CMGC Ser/Thr protein kinase family. GSK-3 subfamily. Interacts with DLT. Interacts with OFP8. Interacts with GRF4. Interacts with PUB24. Interacts with SMOS1. Post-translationally, autophosphorylated. Expressed in lamina joints, vascular tissue and nodes.

It localises to the cytoplasm. It is found in the nucleus. The catalysed reaction is L-seryl-[protein] + ATP = O-phospho-L-seryl-[protein] + ADP + H(+). It carries out the reaction L-threonyl-[protein] + ATP = O-phospho-L-threonyl-[protein] + ADP + H(+). In terms of biological role, serine-threonine kinase that acts as a negative regulator of brassinosteroid (BR) signaling. Phosphorylates DLT and BZR1, two positive regulators that mediates several BR responses. Phosphorylation of DLT and BZR1 inhibits their activities in BR signaling. Phosphorylates OFP8, a positive regulator of BR responses. Phosphorylated OFP8 shuttles from the nucleus to the cytoplasm where it is degraded by the proteasome. Phosphorylates the E3 ubiquitin-protein ligase PUB24, a negative regulator of BR signaling, which targets BZR1 and promotes its degradation via the 26S proteasome. Phosphorylation of PUB24 increases its stability. Phosphorylates the AP2-ERF transcription factor SMOS1, a positive regulator of BR signaling, which cooperatively functions in a transactivating complex with BZR1 to enhance the transcription of BR biosynthetic genes. Phosphorylation of SMOS1 leads to its degradation by an unknown mechanism. The sequence is that of Shaggy-related protein kinase GSK2 from Oryza sativa subsp. japonica (Rice).